The chain runs to 480 residues: MSFPQLGYPQYLSAAGPGAYGGERPGVLAAAAAAAAAASSGRPGTAELGAGAGAAAVTSVLGMYAAAGPYAGAPNYSAFLPYAADLSLFSQMGSQYELKDNPGVHPATFAAHTTPAYYPYGQFQYGDPGRPKNATRESTSTLKAWLNEHRKNPYPTKGEKIMLAIITKMTLTQVSTWFANARRRLKKENKVTWGARSKDQEDGALFGSDTEGDPEKAEDDEEIDLESIDIDQIDERDGDQSNEDEEDKAEAPRARVAPPASARDQSSPLSAAETLKSQDSPLGLVKEVSEPGSTRLLSPGAAAVGLQGAPHSKPKIWSLAETATSPDGAPKASPPPPSSHASAHGPPSGSPLQHPAFLPSHGLYTCHIGKFSNWTNGAFLAQGSLLNMRSFLGVSAPHAAPHGPHLTAPPPPQPPVQVATGVLHGEKASARSSPALPERDLVTRPDSPPQQLKSPFQPVRDNSLAPQEGTPRILAALPSA.

Positions 127 to 189 (DPGRPKNATR…NARRRLKKEN (63 aa)) form a DNA-binding region, homeobox; TALE-type. Disordered regions lie at residues 190-285 (KVTW…LGLV), 318-354 (SLAETATSPDGAPKASPPPPSSHASAHGPPSGSPLQH), and 401-480 (PHGP…LPSA). Over residues 210 to 232 (TEGDPEKAEDDEEIDLESIDIDQ) the composition is skewed to acidic residues. Ser241 bears the Phosphoserine mark. Positions 254–263 (ARVAPPASAR) are enriched in low complexity. Polar residues predominate over residues 264-280 (DQSSPLSAAETLKSQDS). Positions 339–351 (SHASAHGPPSGSP) are enriched in low complexity.

It belongs to the TALE/IRO homeobox family. In terms of tissue distribution, expressed in specific and overlapping patterns with Irx1 and Irx2 in the developing and adult metanephric kidney. In the adult metanephros, renal expression is found in the loop of Henle in the S3 proximal tubule segment and in the thick ascending limb (TAL) of the distal tubule.

It is found in the nucleus. This is Iroquois-class homeodomain protein IRX-1 (Irx1) from Mus musculus (Mouse).